Here is a 165-residue protein sequence, read N- to C-terminus: Glycine cleavage system H protein, mitochondrial (165 aa).

The transit peptide at 1 to 34 (MALRMWASSTANALKLSSSSRLHLSPTFSISRCF) directs the protein to the mitochondrion. The Lipoyl-binding domain occupies 56–138 (VATIGITDHA…YEDGWMIKIK (83 aa)). Lys-97 carries the N6-lipoyllysine modification.

This sequence belongs to the GcvH family. In terms of assembly, the glycine cleavage system is composed of four proteins: P, T, L and H. It depends on (R)-lipoate as a cofactor.

Its subcellular location is the mitochondrion. The glycine cleavage system catalyzes the degradation of glycine. The H protein shuttles the methylamine group of glycine from the P protein to the T protein. The protein is Glycine cleavage system H protein, mitochondrial (GDCSH) of Pisum sativum (Garden pea).